A 941-amino-acid polypeptide reads, in one-letter code: Protein BREAST CANCER SUSCEPTIBILITY 1 homolog (941 aa).

Residues 16-54 (CPICLSLYNSAVSLSCNHVFCNACIVKSMKMDATCPVCK) form an RING-type zinc finger. 2 disordered regions span residues 87 to 282 (FVSQ…ILPS) and 303 to 528 (KVKV…GKDD). Basic and acidic residues-rich tracts occupy residues 96-115 (SDKEKQVRDASVEKASDKNR) and 125-136 (KRNEYGKTKEID). Over residues 157 to 173 (LLQNLSAESLTKPTESV) the composition is skewed to polar residues. Residues 175–196 (TAEKPKDYTENTVIRLDEHPSL) show a composition bias toward basic and acidic residues. Over residues 216–236 (NSSQRTESDQLLGTTPVNVPS) the composition is skewed to polar residues. Positions 242 to 255 (DSDHESPSKEDEQQ) are enriched in basic and acidic residues. The Nuclear localization signal 1 signature appears at 298–305 (QKKLPKVK). Composition is skewed to polar residues over residues 329–357 (GVSQEDNMESSAAATISEQQDSRGTSGTI) and 376–391 (SKAQSTRVQSDLNVSN). 2 stretches are compositionally biased toward basic and acidic residues: residues 428–453 (GKGDQDQAHGPSDTHPEKRSPTEKPS) and 477–487 (KTSEKKLKLDS). The Nuclear localization signal 2 motif lies at 444–451 (EKRSPTEK). A compositionally biased stretch (polar residues) spans 489–498 (MISSKATQPH). Positions 512-528 (DKQDSRNNRKSTVGKDD) are enriched in basic and acidic residues. The C2HC pre-PHD-type zinc finger occupies 561–612 (KFTCAFCQCSEDTEASGEMTHYYRGEPVSADFNGGSKVIHVHKNCAEWAPNV). The segment at 632 to 681 (ISCSCCGLKGAALGCYNKSCKNSFHVTCAKLIPECRWDNVKFVMLCPLDA) adopts a PHD-type; degenerate zinc-finger fold. BRCT domains are found at residues 724–819 (KQFH…PYEI) and 840–941 (KKPK…LVLI).

In terms of assembly, forms heterodimer with BARD1/ROW1. As to expression, expressed ubiquitously with highest levels in flower buds. Mostly expressed in flowers and siliques, and, to a lower extent, in roots, rosette leaves, inflorescence and young cauline leaves.

The protein resides in the nucleus. Functionally, plays a role in DNA repair and in cell-cycle control. Required for the repair of DNA double-strand breaks (DSBs), both natural and induced by genotoxic stress, by homologous recombination (HR). This Arabidopsis thaliana (Mouse-ear cress) protein is Protein BREAST CANCER SUSCEPTIBILITY 1 homolog.